The primary structure comprises 343 residues: Small ribosomal subunit biogenesis GTPase RsgA (343 aa).

Residues 116-275 (RGQLKPVAAN…LIDSPGIREF (160 aa)) form the CP-type G domain. Residues 163-166 (NKFD) and 217-225 (GQSGVGKSS) each bind GTP. C299, C304, H306, and C312 together coordinate Zn(2+).

It belongs to the TRAFAC class YlqF/YawG GTPase family. RsgA subfamily. As to quaternary structure, monomer. Associates with 30S ribosomal subunit, binds 16S rRNA. Zn(2+) serves as cofactor.

The protein localises to the cytoplasm. One of several proteins that assist in the late maturation steps of the functional core of the 30S ribosomal subunit. Helps release RbfA from mature subunits. May play a role in the assembly of ribosomal proteins into the subunit. Circularly permuted GTPase that catalyzes slow GTP hydrolysis, GTPase activity is stimulated by the 30S ribosomal subunit. In Pseudomonas fluorescens (strain SBW25), this protein is Small ribosomal subunit biogenesis GTPase RsgA.